Here is a 207-residue protein sequence, read N- to C-terminus: Large ribosomal subunit protein uL4 (207 aa).

A compositionally biased stretch (polar residues) spans 45-57; it reads RQGTHSVKNRSTV. Residues 45–77 are disordered; sequence RQGTHSVKNRSTVSGGGRKPWRQKGTGNARQGS.

This sequence belongs to the universal ribosomal protein uL4 family. As to quaternary structure, part of the 50S ribosomal subunit.

Its function is as follows. One of the primary rRNA binding proteins, this protein initially binds near the 5'-end of the 23S rRNA. It is important during the early stages of 50S assembly. It makes multiple contacts with different domains of the 23S rRNA in the assembled 50S subunit and ribosome. Forms part of the polypeptide exit tunnel. This is Large ribosomal subunit protein uL4 from Oenococcus oeni (strain ATCC BAA-331 / PSU-1).